A 322-amino-acid chain; its full sequence is Acetyl-coenzyme A carboxylase carboxyl transferase subunit alpha (322 aa).

The CoA carboxyltransferase C-terminal domain occupies 40–297 (PLQKKLGDLR…RETLTRNLEE (258 aa)).

It belongs to the AccA family. As to quaternary structure, acetyl-CoA carboxylase is a heterohexamer composed of biotin carboxyl carrier protein (AccB), biotin carboxylase (AccC) and two subunits each of ACCase subunit alpha (AccA) and ACCase subunit beta (AccD).

It is found in the cytoplasm. The catalysed reaction is N(6)-carboxybiotinyl-L-lysyl-[protein] + acetyl-CoA = N(6)-biotinyl-L-lysyl-[protein] + malonyl-CoA. The protein operates within lipid metabolism; malonyl-CoA biosynthesis; malonyl-CoA from acetyl-CoA: step 1/1. In terms of biological role, component of the acetyl coenzyme A carboxylase (ACC) complex. First, biotin carboxylase catalyzes the carboxylation of biotin on its carrier protein (BCCP) and then the CO(2) group is transferred by the carboxyltransferase to acetyl-CoA to form malonyl-CoA. In Gemmatimonas aurantiaca (strain DSM 14586 / JCM 11422 / NBRC 100505 / T-27), this protein is Acetyl-coenzyme A carboxylase carboxyl transferase subunit alpha.